The following is a 252-amino-acid chain: Adenosylcobinamide-GDP ribazoletransferase (252 aa).

Helical transmembrane passes span leucine 36–valine 56, phenylalanine 59–isoleucine 79, valine 109–threonine 129, proline 133–valine 153, serine 170–leucine 192, glycine 199–threonine 218, and isoleucine 228–leucine 248.

It belongs to the CobS family. It depends on Mg(2+) as a cofactor.

It localises to the cell membrane. The catalysed reaction is alpha-ribazole + adenosylcob(III)inamide-GDP = adenosylcob(III)alamin + GMP + H(+). The enzyme catalyses alpha-ribazole 5'-phosphate + adenosylcob(III)inamide-GDP = adenosylcob(III)alamin 5'-phosphate + GMP + H(+). It participates in cofactor biosynthesis; adenosylcobalamin biosynthesis; adenosylcobalamin from cob(II)yrinate a,c-diamide: step 7/7. In terms of biological role, joins adenosylcobinamide-GDP and alpha-ribazole to generate adenosylcobalamin (Ado-cobalamin). Also synthesizes adenosylcobalamin 5'-phosphate from adenosylcobinamide-GDP and alpha-ribazole 5'-phosphate. This chain is Adenosylcobinamide-GDP ribazoletransferase, found in Clostridium acetobutylicum (strain ATCC 824 / DSM 792 / JCM 1419 / IAM 19013 / LMG 5710 / NBRC 13948 / NRRL B-527 / VKM B-1787 / 2291 / W).